A 520-amino-acid polypeptide reads, in one-letter code: Glucose starvation modulator protein 1 (520 aa).

The zn(2)-C6 fungal-type DNA-binding region spans Cys20 to Cys48. The PAS domain occupies Asp376–Gly445.

Belongs to the ERT1/acuK family.

Its subcellular location is the nucleus. In terms of biological role, transcription factor which regulates nonfermentable carbon utilization. This Scheffersomyces stipitis (strain ATCC 58785 / CBS 6054 / NBRC 10063 / NRRL Y-11545) (Yeast) protein is Glucose starvation modulator protein 1 (GSM1).